The chain runs to 938 residues: Myocardin (938 aa).

The short motif at 12–27 (IRRKFRSVLQLRLQQR) is the MEF2C-binding element. RPEL repeat units follow at residues 18-43 (SVLQLRLQQRRTQEQLANQGLIPPLK), 62-87 (DSLRRKVRNRSDRASLVNMHILQAST), and 106-131 (DDLNEKIALRPGPLELVEKNILPMDS). The interval 37 to 64 (GLIPPLKSPTEFHDPRKKLDSAKTEDSL) is disordered. Residues 46–64 (TEFHDPRKKLDSAKTEDSL) show a composition bias toward basic and acidic residues. Residues 153–205 (FEDDSSRDGLSPDQARSEDPQGSGGSTPDIKSTEAPLAGPLDTIQDLTPGSES) form an HDAC5-binding region. 2 disordered regions span residues 155–282 (DDSS…PPPM) and 339–381 (NEQM…PLPP). Residues 210-221 (TASQLSNQSDSG) are compositionally biased toward polar residues. The span at 248–265 (NRHKKPKDPKPKVKKLKY) shows a compositional bias: basic residues. Low complexity predominate over residues 345-360 (NPNSSSTPLNNTPLSP). Polar residues predominate over residues 361-372 (VKNSLSGQTGVS). One can recognise an SAP domain in the interval 383 to 417 (LDDLKVSELRQQLRIRGLPVSGTKTALVDRLRPFQ). A phosphoserine; by GSK3-beta mark is found at Ser457, Ser461, Ser465, and Ser469. The interval 501–521 (ESLLSSLNGGSGPSEPDGLDS) is disordered. A coiled-coil region spans residues 522 to 566 (EKDKMLVEKQKVINQLTWKLRQEQRQVEELRMQLQKQKSGCNDQK). The disordered stretch occupies residues 586-606 (AAQQASGKGQGHSSDSPPPAC). Residues 588-600 (QQASGKGQGHSSD) are compositionally biased toward polar residues. 4 positions are modified to phosphoserine; by GSK3-beta: Ser627, Ser631, Ser635, and Ser639. Polar residues-rich tracts occupy residues 667 to 694 (GAQRENHGVSSPNSSQGCAQMTGLQSSD) and 701 to 713 (SIPSPTFPKSSPT). The disordered stretch occupies residues 667 to 734 (GAQRENHGVS…DAVKQQMTRS (68 aa)). The tract at residues 717 to 938 (ITQPPSYEDA…SPMDLHLQQW (222 aa)) is required for interaction with and ubiquitination by STUB1. Phosphoserine; by MAPK1 and MAPK3 occurs at positions 815, 862, and 869. At Thr896 the chain carries Phosphothreonine; by MAPK1 and MAPK3.

Homodimer. Interacts with MLLT7/FOXO4. Interacts with SRF, its association does not depend on specific DNA sequences for ternary complex formation. Interacts (via C-terminal) with EP300 (via the CREB-binding domain). Interacts with HDAC4 and HDAC5. Interacts with MEF2C. Interacts (via C-terminus) with STUB1/CHIP. Interacts with PURB. In terms of processing, ubiquitinated; by STUB1/CHIP at the C-terminus, leading to its degradation by the proteasome. Phosphorylation by GSK3B is required for STUB1/CHIP-mediated ubiquitination. Phosphorylation negatively regulates transcriptional activity. Phosphorylated; by GSK3B. In terms of tissue distribution, abundantly expressed in the heart, aorta media and bladder, weakly expressed in the stomach, intestine and lung.

Its subcellular location is the nucleus. Smooth muscle cells (SM) and cardiac muscle cells-specific transcriptional factor which uses the canonical single or multiple CArG boxes DNA sequence. Acts as a cofactor of serum response factor (SRF) with the potential to modulate SRF-target genes. Plays a crucial role in cardiogenesis, urinary bladder development, and differentiation of the smooth muscle cell lineage (myogenesis). Positively regulates the transcription of genes involved in vascular smooth muscle contraction. In Rattus norvegicus (Rat), this protein is Myocardin (Myocd).